A 372-amino-acid polypeptide reads, in one-letter code: RNA polymerase sigma factor SigA (372 aa).

The tract at residues 139–209 is sigma-70 factor domain-2; the sequence is LAEANLRLVV…TRAIADQART (71 aa). Positions 163 to 166 match the Interaction with polymerase core subunit RpoC motif; the sequence is DLIQ. The interval 218–294 is sigma-70 factor domain-3; sequence ETINKLIRVQ…DQDALAPSDA (77 aa). The tract at residues 307–360 is sigma-70 factor domain-4; that stretch reads VLDTLTDREENVLRLRFGLDDGRTRTLEEVGKVFGVTRERIRQIEAKALRKLRH. Residues 333–352 constitute a DNA-binding region (H-T-H motif); it reads LEEVGKVFGVTRERIRQIEA.

The protein belongs to the sigma-70 factor family. RpoD/SigA subfamily. As to quaternary structure, interacts transiently with the RNA polymerase catalytic core.

It is found in the cytoplasm. In terms of biological role, sigma factors are initiation factors that promote the attachment of RNA polymerase to specific initiation sites and are then released. This sigma factor is the primary sigma factor during exponential growth. The protein is RNA polymerase sigma factor SigA of Halalkalibacterium halodurans (strain ATCC BAA-125 / DSM 18197 / FERM 7344 / JCM 9153 / C-125) (Bacillus halodurans).